The following is a 360-amino-acid chain: tRNA-specific 2-thiouridylase MnmA (360 aa).

ATP-binding positions include 9 to 16 (AMSGGVDS) and leucine 35. The Nucleophile role is filled by cysteine 104. Cysteine 104 and cysteine 197 form a disulfide bridge. Glycine 128 provides a ligand contact to ATP. The interaction with tRNA stretch occupies residues 147–149 (KDQ). Cysteine 197 serves as the catalytic Cysteine persulfide intermediate.

The protein belongs to the MnmA/TRMU family.

Its subcellular location is the cytoplasm. The catalysed reaction is S-sulfanyl-L-cysteinyl-[protein] + uridine(34) in tRNA + AH2 + ATP = 2-thiouridine(34) in tRNA + L-cysteinyl-[protein] + A + AMP + diphosphate + H(+). In terms of biological role, catalyzes the 2-thiolation of uridine at the wobble position (U34) of tRNA, leading to the formation of s(2)U34. The sequence is that of tRNA-specific 2-thiouridylase MnmA from Salinispora tropica (strain ATCC BAA-916 / DSM 44818 / JCM 13857 / NBRC 105044 / CNB-440).